The sequence spans 389 residues: MKFVDEAVIRVEAGDGGSGCVSFRREKYVPDGGPDGGDGGDGGSVYLQADESYNTLIDFQFERFHRAERGKNGRGRDCTGHGGEDLILTVPVGTRAIDEETQESLGDLTKHGQRMLVAKGGFHGLGNTRFKSSTNRAPRQKTLGTPGEVRSLKLELMLLADVGLLGMPNAGKSTFIRSVSRAKPKVADYPFTTLVPNLGVVNPRHGQSFVIADIPGLIEGAADGAGLGVQFLKHLERCRVLLHILDIDPIDGSDPVESARAIVAELEKHSPKLASKPRWLVINKTDLMLEDELKERVENIVKELEWEGDVYTISAYNREGTEALSLKLIDFIEALPPEEEIDKEAEVEFKWDNYHENANESLNENFEDDFDDDDDFDDDDYDVKVIYQR.

Residues 1 to 159 enclose the Obg domain; the sequence is MKFVDEAVIR…RSLKLELMLL (159 aa). A disordered region spans residues 122-144; that stretch reads FHGLGNTRFKSSTNRAPRQKTLG. The OBG-type G domain maps to 160 to 333; it reads ADVGLLGMPN…LSLKLIDFIE (174 aa). GTP is bound by residues 166-173, 191-195, 213-216, 283-286, and 314-316; these read GMPNAGKS, FTTLV, DIPG, NKTD, and SAY. Mg(2+)-binding residues include Ser173 and Thr193.

This sequence belongs to the TRAFAC class OBG-HflX-like GTPase superfamily. OBG GTPase family. In terms of assembly, monomer. It depends on Mg(2+) as a cofactor.

Its subcellular location is the cytoplasm. An essential GTPase which binds GTP, GDP and possibly (p)ppGpp with moderate affinity, with high nucleotide exchange rates and a fairly low GTP hydrolysis rate. Plays a role in control of the cell cycle, stress response, ribosome biogenesis and in those bacteria that undergo differentiation, in morphogenesis control. The sequence is that of GTPase Obg from Shewanella woodyi (strain ATCC 51908 / MS32).